We begin with the raw amino-acid sequence, 412 residues long: NAD-dependent dihydropyrimidine dehydrogenase subunit PreT (412 aa).

Glu-286 serves as a coordination point for NAD(+).

The protein belongs to the NADH dehydrogenase family. Heterotetramer of 2 PreA and 2 PreT subunits.

The catalysed reaction is 5,6-dihydrouracil + NAD(+) = uracil + NADH + H(+). It carries out the reaction 5,6-dihydrothymine + NAD(+) = thymine + NADH + H(+). In terms of biological role, involved in pyrimidine base degradation. Catalyzes physiologically the reduction of uracil to 5,6-dihydrouracil (DHU) by using NADH as a specific cosubstrate. It also catalyzes the reverse reaction and the reduction of thymine to 5,6-dihydrothymine (DHT). The polypeptide is NAD-dependent dihydropyrimidine dehydrogenase subunit PreT (preT) (Escherichia coli O157:H7).